Reading from the N-terminus, the 373-residue chain is Chorismate synthase (373 aa).

Residues Arg48 and Arg54 each coordinate NADP(+). Residues Arg125 to Ser127, Asn248 to Ala249, Gly288, Lys303 to Ser307, and Arg329 each bind FMN.

It belongs to the chorismate synthase family. Homotetramer. Requires FMNH2 as cofactor.

It carries out the reaction 5-O-(1-carboxyvinyl)-3-phosphoshikimate = chorismate + phosphate. Its pathway is metabolic intermediate biosynthesis; chorismate biosynthesis; chorismate from D-erythrose 4-phosphate and phosphoenolpyruvate: step 7/7. Its function is as follows. Catalyzes the anti-1,4-elimination of the C-3 phosphate and the C-6 proR hydrogen from 5-enolpyruvylshikimate-3-phosphate (EPSP) to yield chorismate, which is the branch point compound that serves as the starting substrate for the three terminal pathways of aromatic amino acid biosynthesis. This reaction introduces a second double bond into the aromatic ring system. The chain is Chorismate synthase from Colwellia psychrerythraea (strain 34H / ATCC BAA-681) (Vibrio psychroerythus).